The primary structure comprises 129 residues: ATP synthase epsilon chain (129 aa).

The protein belongs to the ATPase epsilon chain family. In terms of assembly, F-type ATPases have 2 components, CF(1) - the catalytic core - and CF(0) - the membrane proton channel. CF(1) has five subunits: alpha(3), beta(3), gamma(1), delta(1), epsilon(1). CF(0) has three main subunits: a, b and c.

Its subcellular location is the cell inner membrane. Functionally, produces ATP from ADP in the presence of a proton gradient across the membrane. The chain is ATP synthase epsilon chain from Campylobacter curvus (strain 525.92).